Reading from the N-terminus, the 153-residue chain is Ribosomal RNA large subunit methyltransferase H (153 aa).

S-adenosyl-L-methionine-binding positions include L70, G102, and 121-126 (LSRMTF).

The protein belongs to the RNA methyltransferase RlmH family. In terms of assembly, homodimer.

It localises to the cytoplasm. It catalyses the reaction pseudouridine(1915) in 23S rRNA + S-adenosyl-L-methionine = N(3)-methylpseudouridine(1915) in 23S rRNA + S-adenosyl-L-homocysteine + H(+). Specifically methylates the pseudouridine at position 1915 (m3Psi1915) in 23S rRNA. The protein is Ribosomal RNA large subunit methyltransferase H of Geobacter sulfurreducens (strain ATCC 51573 / DSM 12127 / PCA).